Here is a 397-residue protein sequence, read N- to C-terminus: MAEFDRDLDDELEFKTSKDVDVTPTFESMDLKDDLLRGIYAYGFEAPSAIQSRAITQIIKGRDTIAQAQSGTGKTATFSISMLEVIDTKHRETQAMVLSPTRELATQIQSVILALGDYMNVQCHACIGGTSLSVDMKKLEAGQQVVSGTPGRCLDMIKKGCLRTKNLKMLILDEADELLNKGFQEQIYDIYRYLPAATQVVVVSATLPHSVLEMTSKFMTDPVRILVKRDELTLEGLKQYFIAVEQEEWKFDTLCDLYDTLTITQAVIFCNTKKKVDWLTQQMKDNNFTVCSMHGDMAQKDRDSIMNEFRSGRSRVLISTDVWARGIDVQQVSLVINYDLPPNRENYIHRIGRSGRFGRKGVAINFATNDDITTLRDIEQYYSTQIDEMPVNVTDMM.

Positions 24–52 (PTFESMDLKDDLLRGIYAYGFEAPSAIQS) match the Q motif motif. In terms of domain architecture, Helicase ATP-binding spans 55–225 (ITQIIKGRDT…SKFMTDPVRI (171 aa)). 68 to 75 (AQSGTGKT) provides a ligand contact to ATP. A DEAD box motif is present at residues 173 to 176 (DEAD). The region spanning 236 to 397 (GLKQYFIAVE…EMPVNVTDMM (162 aa)) is the Helicase C-terminal domain.

The protein belongs to the DEAD box helicase family. DDX48/FAL1 subfamily.

The protein localises to the nucleus. Its subcellular location is the nucleolus. It carries out the reaction ATP + H2O = ADP + phosphate + H(+). ATP-dependent RNA helicase involved in 40S ribosomal subunit biogenesis. Required for the processing and cleavage of 35S pre-rRNA at sites A0, A1, and A2, leading to mature 18S rRNA. This chain is ATP-dependent RNA helicase FAL1 (FAL1), found in Yarrowia lipolytica (strain CLIB 122 / E 150) (Yeast).